Reading from the N-terminus, the 311-residue chain is Pyrimidine-specific ribonucleoside hydrolase RihA (311 aa).

Residue His-240 is part of the active site.

It belongs to the IUNH family. RihA subfamily.

Hydrolyzes with equal efficiency cytidine or uridine to ribose and cytosine or uracil, respectively. This Escherichia fergusonii (strain ATCC 35469 / DSM 13698 / CCUG 18766 / IAM 14443 / JCM 21226 / LMG 7866 / NBRC 102419 / NCTC 12128 / CDC 0568-73) protein is Pyrimidine-specific ribonucleoside hydrolase RihA.